Reading from the N-terminus, the 267-residue chain is Lectin SfL-1 (267 aa).

4 repeat units span residues 1–67 (GRYT…RRGD), 68–135 (SNNY…QSGG), 136–202 (DSYN…STGG), and 203–267 (SNYK…GTAI). Residues 1–267 (GRYTVQNQWG…GPIGFKGTAI (267 aa)) form a 4 X approximate tandem repeats region.

Monomer.

Functionally, lectin specific for high mannose N-glycans, recognizes the branched moiety of these glycans. Does not recognize other types of N-glycans or monosaccharides. The sequence is that of Lectin SfL-1 from Solieria filiformis (Red alga).